The primary structure comprises 339 residues: DNA-directed RNA polymerase subunit alpha (339 aa).

Residues 1 to 235 form an alpha N-terminal domain (alpha-NTD) region; it reads MTIQKNWQEL…DQLNVFVNFE (235 aa). Residues 251–339 form an alpha C-terminal domain (alpha-CTD) region; that stretch reads FNPAFLKKVD…ELAKRFEDHY (89 aa).

This sequence belongs to the RNA polymerase alpha chain family. Homodimer. The RNAP catalytic core consists of 2 alpha, 1 beta, 1 beta' and 1 omega subunit. When a sigma factor is associated with the core the holoenzyme is formed, which can initiate transcription.

It catalyses the reaction RNA(n) + a ribonucleoside 5'-triphosphate = RNA(n+1) + diphosphate. In terms of biological role, DNA-dependent RNA polymerase catalyzes the transcription of DNA into RNA using the four ribonucleoside triphosphates as substrates. This Rhodopseudomonas palustris (strain BisA53) protein is DNA-directed RNA polymerase subunit alpha.